The following is a 642-amino-acid chain: Threonine--tRNA ligase (642 aa).

A TGS domain is found at M1 to T61. Residues D243–P534 are catalytic. Residues C334, H385, and H511 each coordinate Zn(2+).

It belongs to the class-II aminoacyl-tRNA synthetase family. In terms of assembly, homodimer. Zn(2+) serves as cofactor.

It localises to the cytoplasm. It catalyses the reaction tRNA(Thr) + L-threonine + ATP = L-threonyl-tRNA(Thr) + AMP + diphosphate + H(+). Catalyzes the attachment of threonine to tRNA(Thr) in a two-step reaction: L-threonine is first activated by ATP to form Thr-AMP and then transferred to the acceptor end of tRNA(Thr). Also edits incorrectly charged L-seryl-tRNA(Thr). The sequence is that of Threonine--tRNA ligase from Klebsiella pneumoniae (strain 342).